The chain runs to 226 residues: Beta-casein (226 aa).

The first 15 residues, 1–15 (MKVLILACLVALALA), serve as a signal peptide directing secretion. At Thr-18 the chain carries Phosphothreonine; in form 5-P. Ser-21 carries the post-translational modification Phosphoserine; in form 4-P and form 5-P. Position 23 is a phosphoserine; in form 3-P, form 4-P and form 5-P (Ser-23). Phosphoserine; in form 1-P, form 2-P, form 3-P, form 4-P and form 5-P occurs at positions 24 and 25.

The protein belongs to the beta-casein family. In terms of processing, form 1-P is phosphorylated once; half of the molecules are phosphorylated on Ser-24, half on Ser-25. As to expression, mammary gland specific. Secreted in milk.

It is found in the secreted. Functionally, important role in determination of the surface properties of the casein micelles. The polypeptide is Beta-casein (CSN2) (Homo sapiens (Human)).